A 434-amino-acid polypeptide reads, in one-letter code: MQQTCKRKIWMQISVALVTSLWMISAQAELLIKVTEGRVDAVPIAVVPFDGAKNAEEDVSAIVQADLHRSGQFKPLPPQDMLSRPRNEQEMIYRDFKVLGTEYVITGSMKRQETGGYEVGYALFDVARQKKLMSETYRPPASQLRDVAHAISDRIYEQLTGIPGAFSTKILYVTHNRHDANPYQLQYADADGHRVTTILRSNEPIMSPTWSPDGRKIAYVSFEDQGRPGIYIHNLATTEREKVSSFSGINGAPDWSPDGQHLALTLSRDGNPEIYMLNLSTKVLTRLTNNYGIDTEPRWLPDGEHLVFTSSRSGGPQIYKLNINDKSVRRVSFQGGYNARSDVTPDGRYLVYVHRRNGNYNVGVQDLQRGTFNIVTRTDMDESPSVAPNGSMVIYGTQHGGAGVLEAVSIDGRVKVELPSKEGEVREPAWSPFL.

The N-terminal stretch at 1 to 28 (MQQTCKRKIWMQISVALVTSLWMISAQA) is a signal peptide.

The protein belongs to the TolB family. In terms of assembly, the Tol-Pal system is composed of five core proteins: the inner membrane proteins TolA, TolQ and TolR, the periplasmic protein TolB and the outer membrane protein Pal. They form a network linking the inner and outer membranes and the peptidoglycan layer.

It is found in the periplasm. Functionally, part of the Tol-Pal system, which plays a role in outer membrane invagination during cell division and is important for maintaining outer membrane integrity. The sequence is that of Tol-Pal system protein TolB from Alcanivorax borkumensis (strain ATCC 700651 / DSM 11573 / NCIMB 13689 / SK2).